A 346-amino-acid chain; its full sequence is Uroporphyrinogen decarboxylase (346 aa).

Substrate-binding positions include 23 to 27 (RQAGR), D72, Y155, S209, and H322.

The protein belongs to the uroporphyrinogen decarboxylase family. Homodimer.

It localises to the cytoplasm. It catalyses the reaction uroporphyrinogen III + 4 H(+) = coproporphyrinogen III + 4 CO2. The protein operates within porphyrin-containing compound metabolism; protoporphyrin-IX biosynthesis; coproporphyrinogen-III from 5-aminolevulinate: step 4/4. Its function is as follows. Catalyzes the decarboxylation of four acetate groups of uroporphyrinogen-III to yield coproporphyrinogen-III. The polypeptide is Uroporphyrinogen decarboxylase (Anaeromyxobacter dehalogenans (strain 2CP-C)).